A 121-amino-acid chain; its full sequence is Small ribosomal subunit protein uS13 (121 aa).

Residues 89 to 121 (RRHRMSLPVRGQRTRTNARTRRGSRKTVAGRKK) are disordered. Residues 100–121 (QRTRTNARTRRGSRKTVAGRKK) show a composition bias toward basic residues.

This sequence belongs to the universal ribosomal protein uS13 family. As to quaternary structure, part of the 30S ribosomal subunit. Forms a loose heterodimer with protein S19. Forms two bridges to the 50S subunit in the 70S ribosome.

Its function is as follows. Located at the top of the head of the 30S subunit, it contacts several helices of the 16S rRNA. In the 70S ribosome it contacts the 23S rRNA (bridge B1a) and protein L5 of the 50S subunit (bridge B1b), connecting the 2 subunits; these bridges are implicated in subunit movement. Contacts the tRNAs in the A and P-sites. This chain is Small ribosomal subunit protein uS13, found in Prochlorococcus marinus subsp. pastoris (strain CCMP1986 / NIES-2087 / MED4).